The sequence spans 733 residues: MEPEIYRRMGLTDAEFEKVKAILGREPNYVELGMFAVMWSEHCGYKSSRSVLKLFPTKAPWVLQGPGENAGIVDIGDGQAVVFKIESHNHPSAIEPFQGAATGVGGIVRDIFAMGARPIAVLNSLRFGPLDDSRTRYLMGGVVGGIAFYGNCLGLPTVAGEVYFEPSYACNPLVNVMAVGLIEQKNIRRGTAAGVGNAVMLIGARTGRDGIHGATFASEELSEASEERRPSVQVGDPFREKLLIEACLEIINEDLIIGMQDMGAAGITSSSCEMAARAGTGMEIDIALVPRREEGMTPYEVMLSESQERMLLVPKKGAEERIRAICRRWGLEAVIIGRVTGDGLMRIMENGRVVAEVPAKALTDQCPVYERERRRPAYLDEVRQRDLSRLPEPEDYGRVLLGLLAAPNLASKEWVYRQYDYMVRTDTVAGPGGDAAILRVKGTSKGLALTVDGNGRYCYLDPERGGAIAVAEAARNLACVGARPLAITDCLNFGNPEKPEVAWQFYQAVSGMSRACEVLRTPVTGGNVSFYNETESGAIYPTPVVGMVGLLPDIEKRCGIGFRREGDLLILMGETYPEIGGSEYLATFHGLVAGEPPALDLEREKAVQALVREVIAAGLATAAHDCAEGGLAVALAESALAGGLGAEVELASDLRPDFLLFSESQSRILLAVAPEARDRVLDLAREKGVRASVIGRCGGHSLVVRINGRTLFNLSLEEMGKQWRESIPVLMAR.

Residue H42 is part of the active site. 2 residues coordinate ATP: Y45 and K84. E86 serves as a coordination point for Mg(2+). Residues 87–90 (SHNH) and R109 contribute to the substrate site. Catalysis depends on H88, which acts as the Proton acceptor. A Mg(2+)-binding site is contributed by D110. Q233 serves as a coordination point for substrate. D261 lines the Mg(2+) pocket. Residue 305-307 (ESQ) participates in substrate binding. Residues D489 and G526 each contribute to the ATP site. N527 serves as a coordination point for Mg(2+). S529 lines the substrate pocket.

It belongs to the FGAMS family. In terms of assembly, monomer. Part of the FGAM synthase complex composed of 1 PurL, 1 PurQ and 2 PurS subunits.

It localises to the cytoplasm. The catalysed reaction is N(2)-formyl-N(1)-(5-phospho-beta-D-ribosyl)glycinamide + L-glutamine + ATP + H2O = 2-formamido-N(1)-(5-O-phospho-beta-D-ribosyl)acetamidine + L-glutamate + ADP + phosphate + H(+). Its pathway is purine metabolism; IMP biosynthesis via de novo pathway; 5-amino-1-(5-phospho-D-ribosyl)imidazole from N(2)-formyl-N(1)-(5-phospho-D-ribosyl)glycinamide: step 1/2. Its function is as follows. Part of the phosphoribosylformylglycinamidine synthase complex involved in the purines biosynthetic pathway. Catalyzes the ATP-dependent conversion of formylglycinamide ribonucleotide (FGAR) and glutamine to yield formylglycinamidine ribonucleotide (FGAM) and glutamate. The FGAM synthase complex is composed of three subunits. PurQ produces an ammonia molecule by converting glutamine to glutamate. PurL transfers the ammonia molecule to FGAR to form FGAM in an ATP-dependent manner. PurS interacts with PurQ and PurL and is thought to assist in the transfer of the ammonia molecule from PurQ to PurL. The protein is Phosphoribosylformylglycinamidine synthase subunit PurL of Moorella thermoacetica (strain ATCC 39073 / JCM 9320).